Reading from the N-terminus, the 484-residue chain is Tubulin-like protein TubZ (484 aa).

Residue 32 to 33 (QK) participates in GTP binding. Residue D64 coordinates Mg(2+). Residues 140–142 (GVG), N213, K237, and N241 each bind GTP. The segment at 408 to 484 (RKQDEEKVDI…LKTSNPFKKR (77 aa)) is required to bind TubR-DNA complex. The disordered stretch occupies residues 428 to 484 (TFNPYNKNQGFGGASRFSGGKNSAFKRQTSEATSTQNQQEEENIISTLKTSNPFKKR). Positions 452–484 (FKRQTSEATSTQNQQEEENIISTLKTSNPFKKR) are enriched in polar residues.

The protein belongs to the FtsZ family. TubZ subfamily. As to quaternary structure, forms filaments; a 2-stranded filament forms with the non-hydrolyzable GTP-gamma-S which is probably a precursor to the 4-stranded filament that forms in the presence of GTP. The 4-stranded form binds GDP. In vivo polymerizes to form dynamic filaments that often extend from one cell pole to the other, moving in a unidirectional manner. Filaments polymerize at the plus end and depolymerize at the minus end, a process called treadmilling. Polymerization only occurs above a critical concentration, it does not require upstream tubR. The tubC DNA-TubR complex binds to TubZ. The cofactor is Mg(2+).

The protein resides in the cytoplasm. The catalysed reaction is GTP + H2O = GDP + phosphate + H(+). Its activity is regulated as follows. GTPase is inhibited by GTP-gamma-S, which also stabilizes filaments. In terms of biological role, a tubulin-like, filament forming GTPase; the motor component of the type III plasmid partition system which ensures correct segregation of the pBtoxis plasmid. Filaments may seed from the centromere-like site (tubC) when bound by DNA-binding protein TubR; the tubC-TubR complex stabilizes the TubZ filament. Filaments grow at the plus end and depolymerize at the minus end, a process called treadmilling. TubR-tubC complexes track the depolymerizing minus end of the filament, probably pulling plasmid within the cell. Required for pBtoxis plasmid replication/partition. Binds the TubR-tubC complex; GTP is not required for binding to TubR-tubC. TubZ alone does not bind DNA. Has a high GTPase activity in the presence of Mg(2+); in the presence of GTP assembles into dynamic filaments which upon polymerization bind almost exclusively GDP. Filament formation is cooperative, requiring a critical concentration. Formation occurs very quickly and is followed by disassembly as GTP is consumed. The sequence is that of Tubulin-like protein TubZ from Bacillus thuringiensis subsp. israelensis.